We begin with the raw amino-acid sequence, 183 residues long: ATP synthase subunit b 2 (183 aa).

A helical membrane pass occupies residues 27-47; that stretch reads PSFYAFLALLIFFGLLLHMGV.

It belongs to the ATPase B chain family. As to quaternary structure, F-type ATPases have 2 components, F(1) - the catalytic core - and F(0) - the membrane proton channel. F(1) has five subunits: alpha(3), beta(3), gamma(1), delta(1), epsilon(1). F(0) has three main subunits: a(1), b(2) and c(10-14). The alpha and beta chains form an alternating ring which encloses part of the gamma chain. F(1) is attached to F(0) by a central stalk formed by the gamma and epsilon chains, while a peripheral stalk is formed by the delta and b chains.

The protein resides in the cell inner membrane. Its function is as follows. F(1)F(0) ATP synthase produces ATP from ADP in the presence of a proton or sodium gradient. F-type ATPases consist of two structural domains, F(1) containing the extramembraneous catalytic core and F(0) containing the membrane proton channel, linked together by a central stalk and a peripheral stalk. During catalysis, ATP synthesis in the catalytic domain of F(1) is coupled via a rotary mechanism of the central stalk subunits to proton translocation. In terms of biological role, component of the F(0) channel, it forms part of the peripheral stalk, linking F(1) to F(0). The sequence is that of ATP synthase subunit b 2 from Maricaulis maris (strain MCS10) (Caulobacter maris).